A 202-amino-acid polypeptide reads, in one-letter code: ATP-dependent Clp protease proteolytic subunit (202 aa).

The Nucleophile role is filled by S106. H131 is a catalytic residue.

This sequence belongs to the peptidase S14 family. In terms of assembly, fourteen ClpP subunits assemble into 2 heptameric rings which stack back to back to give a disk-like structure with a central cavity, resembling the structure of eukaryotic proteasomes.

It is found in the cytoplasm. It carries out the reaction Hydrolysis of proteins to small peptides in the presence of ATP and magnesium. alpha-casein is the usual test substrate. In the absence of ATP, only oligopeptides shorter than five residues are hydrolyzed (such as succinyl-Leu-Tyr-|-NHMec, and Leu-Tyr-Leu-|-Tyr-Trp, in which cleavage of the -Tyr-|-Leu- and -Tyr-|-Trp bonds also occurs).. In terms of biological role, cleaves peptides in various proteins in a process that requires ATP hydrolysis. Has a chymotrypsin-like activity. Plays a major role in the degradation of misfolded proteins. The polypeptide is ATP-dependent Clp protease proteolytic subunit (Shewanella sp. (strain MR-7)).